The chain runs to 195 residues: Holliday junction branch migration complex subunit RuvA (195 aa).

Residues 1-64 (MIGRIAGLLL…EDAHLLFGFM (64 aa)) are domain I. The domain II stretch occupies residues 65–140 (TEPERVLFRQ…KISPAITLPE (76 aa)). Positions 140–144 (ETGTA) are flexible linker. A domain III region spans residues 145–195 (MASSTDKDILNALSALGYNDREANWAVGQLSEGVTVSDGIMQSLRLLSKAK).

This sequence belongs to the RuvA family. Homotetramer. Forms an RuvA(8)-RuvB(12)-Holliday junction (HJ) complex. HJ DNA is sandwiched between 2 RuvA tetramers; dsDNA enters through RuvA and exits via RuvB. An RuvB hexamer assembles on each DNA strand where it exits the tetramer. Each RuvB hexamer is contacted by two RuvA subunits (via domain III) on 2 adjacent RuvB subunits; this complex drives branch migration. In the full resolvosome a probable DNA-RuvA(4)-RuvB(12)-RuvC(2) complex forms which resolves the HJ.

The protein localises to the cytoplasm. In terms of biological role, the RuvA-RuvB-RuvC complex processes Holliday junction (HJ) DNA during genetic recombination and DNA repair, while the RuvA-RuvB complex plays an important role in the rescue of blocked DNA replication forks via replication fork reversal (RFR). RuvA specifically binds to HJ cruciform DNA, conferring on it an open structure. The RuvB hexamer acts as an ATP-dependent pump, pulling dsDNA into and through the RuvAB complex. HJ branch migration allows RuvC to scan DNA until it finds its consensus sequence, where it cleaves and resolves the cruciform DNA. This Nitrosomonas europaea (strain ATCC 19718 / CIP 103999 / KCTC 2705 / NBRC 14298) protein is Holliday junction branch migration complex subunit RuvA.